Reading from the N-terminus, the 448-residue chain is tRNA modification GTPase MnmE (448 aa).

(6S)-5-formyl-5,6,7,8-tetrahydrofolate-binding residues include arginine 25, glutamate 83, and lysine 122. The region spanning 218–372 (GFKVAIIGKP…LTQKLQKLLD (155 aa)) is the TrmE-type G domain. Asparagine 228 provides a ligand contact to K(+). GTP is bound by residues 228-233 (NTGKSS), 247-253 (SDIAGTT), and 272-275 (DTAG). Residue serine 232 coordinates Mg(2+). Positions 247, 249, and 252 each coordinate K(+). Threonine 253 is a Mg(2+) binding site. Lysine 448 provides a ligand contact to (6S)-5-formyl-5,6,7,8-tetrahydrofolate.

It belongs to the TRAFAC class TrmE-Era-EngA-EngB-Septin-like GTPase superfamily. TrmE GTPase family. In terms of assembly, homodimer. Heterotetramer of two MnmE and two MnmG subunits. K(+) serves as cofactor.

The protein resides in the cytoplasm. In terms of biological role, exhibits a very high intrinsic GTPase hydrolysis rate. Involved in the addition of a carboxymethylaminomethyl (cmnm) group at the wobble position (U34) of certain tRNAs, forming tRNA-cmnm(5)s(2)U34. In Nitratiruptor sp. (strain SB155-2), this protein is tRNA modification GTPase MnmE.